The following is a 302-amino-acid chain: tRNA pseudouridine synthase B (302 aa).

D40 functions as the Nucleophile in the catalytic mechanism.

Belongs to the pseudouridine synthase TruB family. Type 1 subfamily.

It catalyses the reaction uridine(55) in tRNA = pseudouridine(55) in tRNA. Functionally, responsible for synthesis of pseudouridine from uracil-55 in the psi GC loop of transfer RNAs. The polypeptide is tRNA pseudouridine synthase B (Shouchella clausii (strain KSM-K16) (Alkalihalobacillus clausii)).